The sequence spans 753 residues: 5-methyltetrahydropteroyltriglutamate--homocysteine methyltransferase (753 aa).

5-methyltetrahydropteroyltri-L-glutamate-binding positions include 17 to 20 (RELK) and K117. Residues 431-433 (IGS) and E484 each bind L-homocysteine. Residues 431 to 433 (IGS) and E484 each bind L-methionine. 5-methyltetrahydropteroyltri-L-glutamate-binding positions include 515-516 (RC) and W561. Residue D599 participates in L-homocysteine binding. D599 is an L-methionine binding site. E605 provides a ligand contact to 5-methyltetrahydropteroyltri-L-glutamate. H641, C643, and E665 together coordinate Zn(2+). The active-site Proton donor is H694. C726 contributes to the Zn(2+) binding site.

This sequence belongs to the vitamin-B12 independent methionine synthase family. It depends on Zn(2+) as a cofactor.

It catalyses the reaction 5-methyltetrahydropteroyltri-L-glutamate + L-homocysteine = tetrahydropteroyltri-L-glutamate + L-methionine. Its pathway is amino-acid biosynthesis; L-methionine biosynthesis via de novo pathway; L-methionine from L-homocysteine (MetE route): step 1/1. Catalyzes the transfer of a methyl group from 5-methyltetrahydrofolate to homocysteine resulting in methionine formation. The chain is 5-methyltetrahydropteroyltriglutamate--homocysteine methyltransferase from Escherichia coli O8 (strain IAI1).